The following is a 281-amino-acid chain: Lectin alpha chain (281 aa).

3 N-linked (GlcNAc...) asparagine glycosylation sites follow: asparagine 35, asparagine 82, and asparagine 140.

The protein belongs to the leguminous lectin family. In terms of assembly, tetramer of 2 alpha and 2 beta chains. Glycosylated. Post-translationally, the beta chain is produced by partial proteolytic processing of the alpha chain.

Its function is as follows. D-galactose-binding lectin. The polypeptide is Lectin alpha chain (Lablab purpureus (Hyacinth bean)).